The chain runs to 355 residues: UDP-3-O-acylglucosamine N-acyltransferase (355 aa).

The active-site Proton acceptor is the histidine 258.

This sequence belongs to the transferase hexapeptide repeat family. LpxD subfamily. In terms of assembly, homotrimer.

The enzyme catalyses a UDP-3-O-[(3R)-3-hydroxyacyl]-alpha-D-glucosamine + a (3R)-hydroxyacyl-[ACP] = a UDP-2-N,3-O-bis[(3R)-3-hydroxyacyl]-alpha-D-glucosamine + holo-[ACP] + H(+). The protein operates within bacterial outer membrane biogenesis; LPS lipid A biosynthesis. Its function is as follows. Catalyzes the N-acylation of UDP-3-O-acylglucosamine using 3-hydroxyacyl-ACP as the acyl donor. Is involved in the biosynthesis of lipid A, a phosphorylated glycolipid that anchors the lipopolysaccharide to the outer membrane of the cell. This Agrobacterium fabrum (strain C58 / ATCC 33970) (Agrobacterium tumefaciens (strain C58)) protein is UDP-3-O-acylglucosamine N-acyltransferase.